A 227-amino-acid polypeptide reads, in one-letter code: MKNIQGIVFDLYGTLYDVHSVVQACEEVYPGQGDAISRLWRQKQLEYTWLRSLMGRYVNFEKATEDALRFTCTHLGLSLDDETHQRLSDAYLHLTPYADTADAVRRLKAAGLPLGIISNGSHCSIEQVVTNSEMNWAFDQLISVEDVQVFKPDSRVYSLAEKRMGFPKENILFVSSNAWDASAASNFGFPVCWINRQNGAFDELDAKPTHVVRNLAEMSNWLVNSLD.

The Nucleophile role is filled by aspartate 10. Residues leucine 11–tyrosine 12, arginine 41, and serine 118–asparagine 119 contribute to the an (S)-2-haloacid site. The important for catalytic activity stretch occupies residues serine 175–aspartate 180.

Belongs to the HAD-like hydrolase superfamily. S-2-haloalkanoic acid dehalogenase family. Homotetramer.

The enzyme catalyses an (S)-2-haloacid + H2O = a (2R)-2-hydroxycarboxylate + a halide anion + H(+). The catalysed reaction is (S)-2-chloropropanoate + H2O = (R)-lactate + chloride + H(+). Functionally, catalyzes the hydrolytic dehalogenation of small (S)-2-haloalkanoic acids to yield the corresponding (R)-2-hydroxyalkanoic acids. Acts on acids of short chain lengths, C(2) to C(4), with inversion of configuration at C-2. Active with 2-halogenated carboxylic acids and converts only the S-isomer (or L-isomer) of 2-chloropropionic acid with inversion of configuration to produce R-lactate (or D-isomer). This is (S)-2-haloacid dehalogenase from Pseudomonas putida (Arthrobacter siderocapsulatus).